The primary structure comprises 371 residues: N-acetyldiaminopimelate deacetylase (371 aa).

Residue D68 is part of the active site. Catalysis depends on E127, which acts as the Proton acceptor.

Belongs to the peptidase M20A family. N-acetyldiaminopimelate deacetylase subfamily.

The enzyme catalyses N-acetyl-(2S,6S)-2,6-diaminopimelate + H2O = (2S,6S)-2,6-diaminopimelate + acetate. The protein operates within amino-acid biosynthesis; L-lysine biosynthesis via DAP pathway; LL-2,6-diaminopimelate from (S)-tetrahydrodipicolinate (acetylase route): step 3/3. Catalyzes the conversion of N-acetyl-diaminopimelate to diaminopimelate and acetate. The chain is N-acetyldiaminopimelate deacetylase from Listeria monocytogenes serovar 1/2a (strain ATCC BAA-679 / EGD-e).